We begin with the raw amino-acid sequence, 193 residues long: Pilin-like protein PilA2 (193 aa).

Residues 1-4 constitute a propeptide, leader sequence; the sequence is MRKG. Residue leucine 5 is modified to N-methylleucine. Residues 5 to 25 traverse the membrane as a helical segment; it reads LTLVEVLVTLVIMGIAFAALL.

The protein resides in the cell inner membrane. Its subcellular location is the cell outer membrane. It localises to the periplasm. In terms of biological role, plays an essential role in natural DNA transformation but is not required for pilus biogenesis. This is Pilin-like protein PilA2 (pilA2) from Thermus thermophilus (strain ATCC BAA-163 / DSM 7039 / HB27).